The sequence spans 276 residues: Large ribosomal subunit protein uL2cy (276 aa).

Disordered stretches follow at residues 1 to 25 (MAIH…VKSN) and 225 to 276 (MNPV…RRSK). Polar residues predominate over residues 7–25 (KTSTPSTRNGTVDSQVKSN).

The protein belongs to the universal ribosomal protein uL2 family. Part of the 50S ribosomal subunit.

It localises to the plastid. The protein localises to the chloroplast. The chain is Large ribosomal subunit protein uL2cy (rpl2-B) from Coffea arabica (Arabian coffee).